A 276-amino-acid chain; its full sequence is 2,3,4,5-tetrahydropyridine-2,6-dicarboxylate N-succinyltransferase (276 aa).

Substrate contacts are provided by arginine 104 and aspartate 141.

Belongs to the transferase hexapeptide repeat family. Homotrimer.

It localises to the cytoplasm. The catalysed reaction is (S)-2,3,4,5-tetrahydrodipicolinate + succinyl-CoA + H2O = (S)-2-succinylamino-6-oxoheptanedioate + CoA. It functions in the pathway amino-acid biosynthesis; L-lysine biosynthesis via DAP pathway; LL-2,6-diaminopimelate from (S)-tetrahydrodipicolinate (succinylase route): step 1/3. This chain is 2,3,4,5-tetrahydropyridine-2,6-dicarboxylate N-succinyltransferase, found in Legionella pneumophila (strain Corby).